Consider the following 489-residue polypeptide: Probable cytochrome P450 522A1 (489 aa).

A helical transmembrane segment spans residues Met1–Asn21. A heme-binding site is contributed by Cys433.

The protein belongs to the cytochrome P450 family. Heme serves as cofactor.

Its subcellular location is the membrane. This is Probable cytochrome P450 522A1 (cyp522A1) from Dictyostelium discoideum (Social amoeba).